A 1138-amino-acid polypeptide reads, in one-letter code: Condensin-2 complex subunit G2 (1138 aa).

The residue at position 30 (Ser30) is a Phosphoserine. The stretch at 459-497 is one HEAT repeat; that stretch reads LLPTLRYSLHDNSEKVRVAFVDLLLKIKAVRAAKFWKIC. The residue at position 1114 (Thr1114) is a Phosphothreonine.

As to quaternary structure, component of the condensin-2 complex, which contains the SMC2 and SMC4 heterodimer, and 3 non SMC subunits that probably regulate the complex: NCAPH2, NCAPD3 and NCAPG2. Expressed in spleen, lung and testis as well as in hematopoietic cell lines.

Its subcellular location is the nucleus. Functionally, regulatory subunit of the condensin-2 complex, a complex which establishes mitotic chromosome architecture and is involved in physical rigidity of the chromatid axis. Is required for early embryonic development and is essential for viability and expansion of the inner cell mass (ICM) of the implanting blastocyst. In Mus musculus (Mouse), this protein is Condensin-2 complex subunit G2 (Ncapg2).